Consider the following 135-residue polypeptide: Cofilin-4 (135 aa).

The ADF-H domain maps to 3–135 (SCASINDEVI…SQSLVEERCK (133 aa)).

It belongs to the actin-binding proteins ADF family.

The protein localises to the cytoplasm. It is found in the cytoskeleton. In terms of biological role, controls actin polymerization and depolymerization. This is Cofilin-4 (cofE) from Dictyostelium discoideum (Social amoeba).